The chain runs to 497 residues: Serine hydroxymethyltransferase (497 aa).

(6S)-5,6,7,8-tetrahydrofolate-binding positions include L176 and G180–L182. N6-(pyridoxal phosphate)lysine is present on K289.

The protein belongs to the SHMT family. Homodimer. It depends on pyridoxal 5'-phosphate as a cofactor.

It localises to the cytoplasm. It carries out the reaction (6R)-5,10-methylene-5,6,7,8-tetrahydrofolate + glycine + H2O = (6S)-5,6,7,8-tetrahydrofolate + L-serine. Its pathway is one-carbon metabolism; tetrahydrofolate interconversion. The protein operates within amino-acid biosynthesis; glycine biosynthesis; glycine from L-serine: step 1/1. Catalyzes the reversible interconversion of serine and glycine with tetrahydrofolate (THF) serving as the one-carbon carrier. This reaction serves as the major source of one-carbon groups required for the biosynthesis of purines, thymidylate, methionine, and other important biomolecules. Also exhibits THF-independent aldolase activity toward beta-hydroxyamino acids, producing glycine and aldehydes, via a retro-aldol mechanism. The sequence is that of Serine hydroxymethyltransferase from Chlamydia trachomatis serovar L2b (strain UCH-1/proctitis).